The primary structure comprises 368 residues: Cytoskeleton protein RodZ (368 aa).

Residues 1-111 are Cytoplasmic-facing; it reads MNTEASQDQT…LGKKHKKRDG (111 aa). One can recognise an HTH cro/C1-type domain in the interval 19–79; that stretch reads LRQARESLGL…KLVHLPEDEL (61 aa). Residues 30–49 constitute a DNA-binding region (H-T-H motif); the sequence is QQTVAERLCLKVSTIRDIEE. A helical; Signal-anchor for type II membrane protein membrane pass occupies residues 112-132; it reads WLMSFTWLIVLVVLGLTGAWW. Residues 133 to 368 lie on the Periplasmic side of the membrane; that stretch reads WQNHQAQQAE…RVARLTVGVE (236 aa). The disordered stretch occupies residues 151–243; it reads SAQLSQNGGQ…STEPVDTANT (93 aa). Low complexity predominate over residues 193–221; the sequence is STSAVTNSATTSSATTSSVPTTSSVPKTT. A compositionally biased stretch (polar residues) spans 229–243; that stretch reads VPKTNSTEPVDTANT.

It belongs to the RodZ family.

The protein localises to the cell inner membrane. Its function is as follows. Cytoskeletal protein that is involved in cell-shape control through regulation of the length of the long axis. The sequence is that of Cytoskeleton protein RodZ from Yersinia pseudotuberculosis serotype O:3 (strain YPIII).